We begin with the raw amino-acid sequence, 193 residues long: Penicillin-binding protein activator LpoB (193 aa).

An N-terminal signal peptide occupies residues 1–16 (MKRYLSVALAALVLTG). The N-palmitoyl cysteine moiety is linked to residue Cys-17. A lipid anchor (S-diacylglycerol cysteine) is attached at Cys-17. The tract at residues 24 to 55 (EPTTPPVTIEPVTPPVPETPPPVDNVPPPPKM) is disordered. Residues 35 to 54 (VTPPVPETPPPVDNVPPPPK) show a composition bias toward pro residues.

This sequence belongs to the LpoB family. Interacts with PBP1b.

The protein localises to the cell outer membrane. Functionally, regulator of peptidoglycan synthesis that is essential for the function of penicillin-binding protein 1B (PBP1b). This chain is Penicillin-binding protein activator LpoB, found in Yersinia enterocolitica serotype O:8 / biotype 1B (strain NCTC 13174 / 8081).